Here is a 361-residue protein sequence, read N- to C-terminus: Phospho-N-acetylmuramoyl-pentapeptide-transferase (361 aa).

Helical transmembrane passes span Leu28–Leu48, Thr74–Leu94, Ile99–Ala119, Ser133–Asp153, Leu168–Ser188, Val203–Ile223, Thr236–Phe256, Val263–Ile283, Ile288–Val308, and Lys338–Leu358.

It belongs to the glycosyltransferase 4 family. MraY subfamily. Requires Mg(2+) as cofactor.

It localises to the cell membrane. The enzyme catalyses UDP-N-acetyl-alpha-D-muramoyl-L-alanyl-gamma-D-glutamyl-meso-2,6-diaminopimeloyl-D-alanyl-D-alanine + di-trans,octa-cis-undecaprenyl phosphate = di-trans,octa-cis-undecaprenyl diphospho-N-acetyl-alpha-D-muramoyl-L-alanyl-D-glutamyl-meso-2,6-diaminopimeloyl-D-alanyl-D-alanine + UMP. It functions in the pathway cell wall biogenesis; peptidoglycan biosynthesis. Catalyzes the initial step of the lipid cycle reactions in the biosynthesis of the cell wall peptidoglycan: transfers peptidoglycan precursor phospho-MurNAc-pentapeptide from UDP-MurNAc-pentapeptide onto the lipid carrier undecaprenyl phosphate, yielding undecaprenyl-pyrophosphoryl-MurNAc-pentapeptide, known as lipid I. The protein is Phospho-N-acetylmuramoyl-pentapeptide-transferase of Rickettsia montanensis.